Consider the following 225-residue polypeptide: uncharacterized protein (225 aa).

Residues 1-22 (MLQHYSVSWKKGLAALCLLAVA) form the signal peptide. The 4Fe-4S ferredoxin-type domain occupies 161–190 (GNLTAAEEKKTGCLVCLDSCPVGIVSNATY).

This is an uncharacterized protein from Escherichia coli (strain K12).